Here is a 496-residue protein sequence, read N- to C-terminus: Aspartyl/glutamyl-tRNA(Asn/Gln) amidotransferase subunit B (496 aa).

This sequence belongs to the GatB/GatE family. GatB subfamily. As to quaternary structure, heterotrimer of A, B and C subunits.

It catalyses the reaction L-glutamyl-tRNA(Gln) + L-glutamine + ATP + H2O = L-glutaminyl-tRNA(Gln) + L-glutamate + ADP + phosphate + H(+). The catalysed reaction is L-aspartyl-tRNA(Asn) + L-glutamine + ATP + H2O = L-asparaginyl-tRNA(Asn) + L-glutamate + ADP + phosphate + 2 H(+). Allows the formation of correctly charged Asn-tRNA(Asn) or Gln-tRNA(Gln) through the transamidation of misacylated Asp-tRNA(Asn) or Glu-tRNA(Gln) in organisms which lack either or both of asparaginyl-tRNA or glutaminyl-tRNA synthetases. The reaction takes place in the presence of glutamine and ATP through an activated phospho-Asp-tRNA(Asn) or phospho-Glu-tRNA(Gln). The polypeptide is Aspartyl/glutamyl-tRNA(Asn/Gln) amidotransferase subunit B (Xanthobacter autotrophicus (strain ATCC BAA-1158 / Py2)).